Here is an 833-residue protein sequence, read N- to C-terminus: Major vault protein (833 aa).

MVP repeat units follow at residues 54–118 (RHYC…QLIP), 119–170 (PNTG…TVIY), 171–223 (PNTA…TMLS), 224–278 (DLKA…VSLS), 280–328 (KEYV…LVVG), 329–380 (KEEA…MALD), and 381–433 (KNEG…SIQT).

As to quaternary structure, the vault ribonucleoprotein particle is a huge (400 A x 670 A) cage structure of 12.9 MDa. It consists of a dimer of half-vaults, with each half-vault comprising 39 identical major vault protein (MVP) chains, PARP4 and one or more vault RNAs (vRNAs).

It localises to the cytoplasm. The protein resides in the nucleus. In terms of biological role, required for normal vault structure. Vaults are multi-subunit structures that may act as scaffolds for proteins involved in signal transduction. Vaults may also play a role in nucleo-cytoplasmic transport. The polypeptide is Major vault protein (Leishmania infantum).